The sequence spans 208 residues: Small ribosomal subunit protein uS4 (208 aa).

An S4 RNA-binding domain is found at 98–161 (QRLDNLVYRM…KNNPQILRAV (64 aa)).

It belongs to the universal ribosomal protein uS4 family. Part of the 30S ribosomal subunit. Contacts protein S5. The interaction surface between S4 and S5 is involved in control of translational fidelity.

Its function is as follows. One of the primary rRNA binding proteins, it binds directly to 16S rRNA where it nucleates assembly of the body of the 30S subunit. In terms of biological role, with S5 and S12 plays an important role in translational accuracy. This chain is Small ribosomal subunit protein uS4, found in Campylobacter hominis (strain ATCC BAA-381 / DSM 21671 / CCUG 45161 / LMG 19568 / NCTC 13146 / CH001A).